A 359-amino-acid chain; its full sequence is Peptide chain release factor 1 (359 aa).

Glutamine 236 bears the N5-methylglutamine mark.

This sequence belongs to the prokaryotic/mitochondrial release factor family. Methylated by PrmC. Methylation increases the termination efficiency of RF1.

The protein localises to the cytoplasm. Peptide chain release factor 1 directs the termination of translation in response to the peptide chain termination codons UAG and UAA. The polypeptide is Peptide chain release factor 1 (Streptococcus pyogenes serotype M12 (strain MGAS2096)).